The sequence spans 96 residues: Integration host factor subunit alpha (96 aa).

It belongs to the bacterial histone-like protein family. In terms of assembly, heterodimer of an alpha and a beta chain.

This protein is one of the two subunits of integration host factor, a specific DNA-binding protein that functions in genetic recombination as well as in transcriptional and translational control. The protein is Integration host factor subunit alpha of Haemophilus influenzae (strain 86-028NP).